A 158-amino-acid polypeptide reads, in one-letter code: SsrA-binding protein (158 aa).

The protein belongs to the SmpB family.

The protein localises to the cytoplasm. In terms of biological role, required for rescue of stalled ribosomes mediated by trans-translation. Binds to transfer-messenger RNA (tmRNA), required for stable association of tmRNA with ribosomes. tmRNA and SmpB together mimic tRNA shape, replacing the anticodon stem-loop with SmpB. tmRNA is encoded by the ssrA gene; the 2 termini fold to resemble tRNA(Ala) and it encodes a 'tag peptide', a short internal open reading frame. During trans-translation Ala-aminoacylated tmRNA acts like a tRNA, entering the A-site of stalled ribosomes, displacing the stalled mRNA. The ribosome then switches to translate the ORF on the tmRNA; the nascent peptide is terminated with the 'tag peptide' encoded by the tmRNA and targeted for degradation. The ribosome is freed to recommence translation, which seems to be the essential function of trans-translation. The protein is SsrA-binding protein of Roseiflexus castenholzii (strain DSM 13941 / HLO8).